Here is a 154-residue protein sequence, read N- to C-terminus: Xanthine-guanine phosphoribosyltransferase (154 aa).

Residues 38–39 (RG), K71, and 90–98 (DDLVDTGGT) each bind 5-phospho-alpha-D-ribose 1-diphosphate. K71 contributes to the GMP binding site. D91 lines the Mg(2+) pocket. 2 residues coordinate guanine: D94 and I137. Xanthine-binding residues include D94 and I137. GMP contacts are provided by residues 94–98 (DTGGT) and 136–137 (WI).

It belongs to the purine/pyrimidine phosphoribosyltransferase family. XGPT subfamily. Homotetramer. Requires Mg(2+) as cofactor.

The protein localises to the cell inner membrane. It carries out the reaction GMP + diphosphate = guanine + 5-phospho-alpha-D-ribose 1-diphosphate. The catalysed reaction is XMP + diphosphate = xanthine + 5-phospho-alpha-D-ribose 1-diphosphate. It catalyses the reaction IMP + diphosphate = hypoxanthine + 5-phospho-alpha-D-ribose 1-diphosphate. It functions in the pathway purine metabolism; GMP biosynthesis via salvage pathway; GMP from guanine: step 1/1. The protein operates within purine metabolism; XMP biosynthesis via salvage pathway; XMP from xanthine: step 1/1. Purine salvage pathway enzyme that catalyzes the transfer of the ribosyl-5-phosphate group from 5-phospho-alpha-D-ribose 1-diphosphate (PRPP) to the N9 position of the 6-oxopurines guanine and xanthine to form the corresponding ribonucleotides GMP (guanosine 5'-monophosphate) and XMP (xanthosine 5'-monophosphate), with the release of PPi. To a lesser extent, also acts on hypoxanthine. This chain is Xanthine-guanine phosphoribosyltransferase, found in Buchnera aphidicola subsp. Schizaphis graminum (strain Sg).